The following is a 345-amino-acid chain: S-adenosylmethionine:tRNA ribosyltransferase-isomerase (345 aa).

It belongs to the QueA family. As to quaternary structure, monomer.

It is found in the cytoplasm. The enzyme catalyses 7-aminomethyl-7-carbaguanosine(34) in tRNA + S-adenosyl-L-methionine = epoxyqueuosine(34) in tRNA + adenine + L-methionine + 2 H(+). The protein operates within tRNA modification; tRNA-queuosine biosynthesis. Functionally, transfers and isomerizes the ribose moiety from AdoMet to the 7-aminomethyl group of 7-deazaguanine (preQ1-tRNA) to give epoxyqueuosine (oQ-tRNA). This is S-adenosylmethionine:tRNA ribosyltransferase-isomerase from Shewanella loihica (strain ATCC BAA-1088 / PV-4).